Here is a 267-residue protein sequence, read N- to C-terminus: Glucosamine-6-phosphate deaminase (267 aa).

The Proton acceptor; for enolization step role is filled by Asp-76. Asp-145 functions as the For ring-opening step in the catalytic mechanism. His-147 serves as the catalytic Proton acceptor; for ring-opening step. Glu-152 serves as the catalytic For ring-opening step.

This sequence belongs to the glucosamine/galactosamine-6-phosphate isomerase family. Homohexamer.

The protein localises to the cytoplasm. It catalyses the reaction alpha-D-glucosamine 6-phosphate + H2O = beta-D-fructose 6-phosphate + NH4(+). The protein operates within nucleotide-sugar biosynthesis; UDP-N-acetyl-alpha-D-glucosamine biosynthesis; alpha-D-glucosamine 6-phosphate from D-fructose 6-phosphate: step 1/1. Its function is as follows. Catalyzes the reversible conversion of alpha-D-glucosamine 6-phosphate (GlcN-6P) into beta-D-fructose 6-phosphate (Fru-6P) and ammonium ion, a regulatory reaction step in de novo uridine diphosphate-N-acetyl-alpha-D-glucosamine (UDP-GlcNAc) biosynthesis via hexosamine pathway. The polypeptide is Glucosamine-6-phosphate deaminase (Dictyostelium discoideum (Social amoeba)).